The sequence spans 123 residues: Small ribosomal subunit protein uS12 (123 aa).

A 3-methylthioaspartic acid modification is found at Asp89. Residues 100–123 (GSLDTSGVKDRKQGRSKYGTKRPK) form a disordered region. Over residues 113–123 (GRSKYGTKRPK) the composition is skewed to basic residues.

It belongs to the universal ribosomal protein uS12 family. Part of the 30S ribosomal subunit. Contacts proteins S8 and S17. May interact with IF1 in the 30S initiation complex.

Functionally, with S4 and S5 plays an important role in translational accuracy. In terms of biological role, interacts with and stabilizes bases of the 16S rRNA that are involved in tRNA selection in the A site and with the mRNA backbone. Located at the interface of the 30S and 50S subunits, it traverses the body of the 30S subunit contacting proteins on the other side and probably holding the rRNA structure together. The combined cluster of proteins S8, S12 and S17 appears to hold together the shoulder and platform of the 30S subunit. This is Small ribosomal subunit protein uS12 from Ectopseudomonas mendocina (strain ymp) (Pseudomonas mendocina).